We begin with the raw amino-acid sequence, 553 residues long: MAAKEVKFGNDARAKMLRGVNVLADAVKVTLGPKGRNVVLDKSFGAPTITKDGVSVAREIELEDKFENMGTQMVKEVASKANDAAGDGTTTATVLAQSIITEGLKAVAAGMNPMDLKRGIDKAVIAAVEELRKLSVPCSDSKAIAQVGTISANSDLTVGKLIAEAMGKVGKEGVITVEEGTGLQDELDVVEGMQFDRGYLSPYFINKPESGAVELENPFILLADKKISNIRELLPILEAVAKAGKSLLIIAEDVEGEALATLIVNTMRGIVKVAAVKAPGFGDRRKAMLQDIATLTGGTVISEEIGLELEKTILDDLGQAKRVVINKDTTIIIDGIGNEINIKGRIAQIHQQIEEATSDYVKEKLQERVAKLADGVAVIKVGAATEVELKEKKGRVEDALHATRAAVEEGVVAGGGVALIRVAGKISNLTGDNEDQNVGIKVALRAMESPLRQIVINAGEEASVIANNVKACEGSYGYNAYTEEYGDMISMGILDPTKVTRSALQYAASVAGLMITTECMITDLPKGETPDLNNSGGMGGGMGGGMGGMGGMM.

ATP-binding positions include 30–33 (TLGP), Lys51, 87–91 (DGTTT), Gly415, and Asp495.

This sequence belongs to the chaperonin (HSP60) family. Forms a cylinder of 14 subunits composed of two heptameric rings stacked back-to-back. Interacts with the co-chaperonin GroES.

It is found in the cytoplasm. The catalysed reaction is ATP + H2O + a folded polypeptide = ADP + phosphate + an unfolded polypeptide.. Functionally, together with its co-chaperonin GroES, plays an essential role in assisting protein folding. The GroEL-GroES system forms a nano-cage that allows encapsulation of the non-native substrate proteins and provides a physical environment optimized to promote and accelerate protein folding. This chain is Chaperonin GroEL, found in Buchnera aphidicola subsp. Tuberolachnus salignus.